We begin with the raw amino-acid sequence, 87 residues long: Ragulator complex protein LAMTOR4 homolog (87 aa).

The protein belongs to the LAMTOR4 family. As to quaternary structure, part of the Ragulator complex.

It localises to the lysosome. Functionally, regulator of the TOR pathway, a signaling cascade that promotes cell growth in response to growth factors, energy levels, and amino acids. As part of the Ragulator complex, may activate the TOR signaling cascade in response to amino acids. The polypeptide is Ragulator complex protein LAMTOR4 homolog (Dictyostelium discoideum (Social amoeba)).